Consider the following 901-residue polypeptide: Core protein VP3 (901 aa).

It belongs to the orbivirus VP3 family.

Its subcellular location is the virion. The VP3 protein is one of the five proteins (with VP1, VP4, VP6 and VP7) which form the inner capsid of the virus. This is Core protein VP3 (Segment-3) from Antilocapra americana (Pronghorn).